A 190-amino-acid chain; its full sequence is Pyridoxal 5'-phosphate synthase subunit PdxT (190 aa).

46–48 provides a ligand contact to L-glutamine; sequence GES. C78 serves as the catalytic Nucleophile. L-glutamine-binding positions include R108 and 137-138; that span reads IR. Active-site charge relay system residues include H174 and E176.

This sequence belongs to the glutaminase PdxT/SNO family. As to quaternary structure, in the presence of PdxS, forms a dodecamer of heterodimers. Only shows activity in the heterodimer.

The catalysed reaction is aldehydo-D-ribose 5-phosphate + D-glyceraldehyde 3-phosphate + L-glutamine = pyridoxal 5'-phosphate + L-glutamate + phosphate + 3 H2O + H(+). It catalyses the reaction L-glutamine + H2O = L-glutamate + NH4(+). The protein operates within cofactor biosynthesis; pyridoxal 5'-phosphate biosynthesis. Its function is as follows. Catalyzes the hydrolysis of glutamine to glutamate and ammonia as part of the biosynthesis of pyridoxal 5'-phosphate. The resulting ammonia molecule is channeled to the active site of PdxS. In Herpetosiphon aurantiacus (strain ATCC 23779 / DSM 785 / 114-95), this protein is Pyridoxal 5'-phosphate synthase subunit PdxT.